Here is a 481-residue protein sequence, read N- to C-terminus: Proline--tRNA ligase (481 aa).

This sequence belongs to the class-II aminoacyl-tRNA synthetase family. ProS type 3 subfamily. As to quaternary structure, homodimer.

Its subcellular location is the cytoplasm. The catalysed reaction is tRNA(Pro) + L-proline + ATP = L-prolyl-tRNA(Pro) + AMP + diphosphate. Functionally, catalyzes the attachment of proline to tRNA(Pro) in a two-step reaction: proline is first activated by ATP to form Pro-AMP and then transferred to the acceptor end of tRNA(Pro). In Thermococcus kodakarensis (strain ATCC BAA-918 / JCM 12380 / KOD1) (Pyrococcus kodakaraensis (strain KOD1)), this protein is Proline--tRNA ligase.